Consider the following 341-residue polypeptide: Methionine import ATP-binding protein MetN 3 (341 aa).

The ABC transporter domain maps to 2–241; that stretch reads ILLENVKKIY…PKQDITKRFV (240 aa). Position 38-45 (38-45) interacts with ATP; that stretch reads GYSGAGKS.

It belongs to the ABC transporter superfamily. Methionine importer (TC 3.A.1.24) family. The complex is composed of two ATP-binding proteins (MetN), two transmembrane proteins (MetI) and a solute-binding protein (MetQ).

It is found in the cell membrane. The catalysed reaction is L-methionine(out) + ATP + H2O = L-methionine(in) + ADP + phosphate + H(+). The enzyme catalyses D-methionine(out) + ATP + H2O = D-methionine(in) + ADP + phosphate + H(+). Part of the ABC transporter complex MetNIQ involved in methionine import. Responsible for energy coupling to the transport system. In Bacillus cereus (strain ATCC 14579 / DSM 31 / CCUG 7414 / JCM 2152 / NBRC 15305 / NCIMB 9373 / NCTC 2599 / NRRL B-3711), this protein is Methionine import ATP-binding protein MetN 3.